A 121-amino-acid polypeptide reads, in one-letter code: MNLIQQLEQEEIARLNKDIPEFAPGDTVVVSVRVVEGTRSRLQAYEGVVIARRNRGLNSNFIVRKISSGEGVERTFQLYSPTVEKIEVKRRGDVRRAKLYYLRGLTGKAARIKEKLPARKG.

Belongs to the bacterial ribosomal protein bL19 family.

This protein is located at the 30S-50S ribosomal subunit interface and may play a role in the structure and function of the aminoacyl-tRNA binding site. The chain is Large ribosomal subunit protein bL19 from Neisseria meningitidis serogroup C (strain 053442).